The chain runs to 142 residues: Large ribosomal subunit protein uL11 (142 aa).

Belongs to the universal ribosomal protein uL11 family. As to quaternary structure, part of the ribosomal stalk of the 50S ribosomal subunit. Interacts with L10 and the large rRNA to form the base of the stalk. L10 forms an elongated spine to which L12 dimers bind in a sequential fashion forming a multimeric L10(L12)X complex. In terms of processing, one or more lysine residues are methylated.

Forms part of the ribosomal stalk which helps the ribosome interact with GTP-bound translation factors. This is Large ribosomal subunit protein uL11 from Mycobacterium tuberculosis (strain ATCC 25177 / H37Ra).